The following is a 260-amino-acid chain: Indole-3-glycerol phosphate synthase (260 aa).

This sequence belongs to the TrpC family.

It carries out the reaction 1-(2-carboxyphenylamino)-1-deoxy-D-ribulose 5-phosphate + H(+) = (1S,2R)-1-C-(indol-3-yl)glycerol 3-phosphate + CO2 + H2O. Its pathway is amino-acid biosynthesis; L-tryptophan biosynthesis; L-tryptophan from chorismate: step 4/5. The sequence is that of Indole-3-glycerol phosphate synthase from Acetivibrio thermocellus (strain ATCC 27405 / DSM 1237 / JCM 9322 / NBRC 103400 / NCIMB 10682 / NRRL B-4536 / VPI 7372) (Clostridium thermocellum).